Consider the following 776-residue polypeptide: 5-methyltetrahydropteroyltriglutamate--homocysteine methyltransferase (776 aa).

5-methyltetrahydropteroyltri-L-glutamate contacts are provided by residues 16–19 (RELK) and Lys-112. Residues 432-434 (IGS) and Glu-485 each bind L-homocysteine. Residues 432–434 (IGS) and Glu-485 each bind L-methionine. 5-methyltetrahydropteroyltri-L-glutamate is bound by residues 516-517 (RC) and Trp-562. L-homocysteine is bound at residue Asp-600. Asp-600 provides a ligand contact to L-methionine. Glu-606 is a binding site for 5-methyltetrahydropteroyltri-L-glutamate. Positions 642, 644, and 666 each coordinate Zn(2+). His-695 functions as the Proton donor in the catalytic mechanism. Residue Cys-727 participates in Zn(2+) binding. Positions 755 to 776 (HAGAVHAGTPATRAEHAESALA) are disordered. A compositionally biased stretch (basic and acidic residues) spans 767–776 (RAEHAESALA).

This sequence belongs to the vitamin-B12 independent methionine synthase family. Requires Zn(2+) as cofactor.

The catalysed reaction is 5-methyltetrahydropteroyltri-L-glutamate + L-homocysteine = tetrahydropteroyltri-L-glutamate + L-methionine. It functions in the pathway amino-acid biosynthesis; L-methionine biosynthesis via de novo pathway; L-methionine from L-homocysteine (MetE route): step 1/1. Functionally, catalyzes the transfer of a methyl group from 5-methyltetrahydrofolate to homocysteine resulting in methionine formation. The chain is 5-methyltetrahydropteroyltriglutamate--homocysteine methyltransferase from Ralstonia nicotianae (strain ATCC BAA-1114 / GMI1000) (Ralstonia solanacearum).